We begin with the raw amino-acid sequence, 264 residues long: 3-methyl-2-oxobutanoate hydroxymethyltransferase (264 aa).

Positions 45 and 84 each coordinate Mg(2+). 3-methyl-2-oxobutanoate contacts are provided by residues 45–46 (DS), aspartate 84, and lysine 112. Position 114 (glutamate 114) interacts with Mg(2+). Glutamate 181 acts as the Proton acceptor in catalysis.

The protein belongs to the PanB family. Homodecamer; pentamer of dimers. Requires Mg(2+) as cofactor.

The protein resides in the cytoplasm. It catalyses the reaction 3-methyl-2-oxobutanoate + (6R)-5,10-methylene-5,6,7,8-tetrahydrofolate + H2O = 2-dehydropantoate + (6S)-5,6,7,8-tetrahydrofolate. Its pathway is cofactor biosynthesis; (R)-pantothenate biosynthesis; (R)-pantoate from 3-methyl-2-oxobutanoate: step 1/2. Its function is as follows. Catalyzes the reversible reaction in which hydroxymethyl group from 5,10-methylenetetrahydrofolate is transferred onto alpha-ketoisovalerate to form ketopantoate. The protein is 3-methyl-2-oxobutanoate hydroxymethyltransferase of Escherichia coli O7:K1 (strain IAI39 / ExPEC).